Consider the following 345-residue polypeptide: Phosphate acyltransferase (345 aa).

This sequence belongs to the PlsX family. As to quaternary structure, homodimer. Probably interacts with PlsY.

It is found in the cytoplasm. The enzyme catalyses a fatty acyl-[ACP] + phosphate = an acyl phosphate + holo-[ACP]. It participates in lipid metabolism; phospholipid metabolism. Catalyzes the reversible formation of acyl-phosphate (acyl-PO(4)) from acyl-[acyl-carrier-protein] (acyl-ACP). This enzyme utilizes acyl-ACP as fatty acyl donor, but not acyl-CoA. This is Phosphate acyltransferase from Dichelobacter nodosus (strain VCS1703A).